Here is a 587-residue protein sequence, read N- to C-terminus: MKDTIRQLIQQALDQLTADGTLPAGLTPDIQVENTKDRSHGDFASNIAMMLAKPAGMKPRDLAARLVEAIPAHEQLAKVEIAGPGFLNFFQDHVWLAASLDRALADERLGVRKAGPAQRVVIDLSSPNLAKEMHVGHLRSTIIGDAVARVLEFLGDTVIRQNHVGDWGTQFGMLLAYLEEQPVDAEAELHDLEVFYRAAKKRFDESPEFADRARELVVKLQAGDPDCLRLWTRFNEISLSHCQKVYDRLGVKLSMADVMGESAYNDDLAQVVADLTAKGLLTEDNGALCVFLEEFKNAEGNPLPVIVQKAGGGYLYATTDLAAMRYRHNVLHADRVLYFVDQRQALHFQQVFEVARRAGFVPAGMELEHMGFGTMNGADGRPFKTRDGGTVKLIDLLEEAESRAYALVKERNEQRAERGEEPFDEVQLREIGRVVGIDSVKYADLSKHRTSDYSFNFELMLSFEGNTAPYLLYACTRVASVFRKLGQGREQLGGKIVLEQPQELALAAQLAQFGDLINNVALKGVPHLLCAYLYELAGLFSSFYEHCPILTAEDPAQKDSRLRLAALTGRTLEQGLELLGLKTLERM.

The short motif at P127 to H137 is the 'HIGH' region element.

This sequence belongs to the class-I aminoacyl-tRNA synthetase family. As to quaternary structure, monomer.

It is found in the cytoplasm. The catalysed reaction is tRNA(Arg) + L-arginine + ATP = L-arginyl-tRNA(Arg) + AMP + diphosphate. This chain is Arginine--tRNA ligase, found in Pseudomonas aeruginosa (strain ATCC 15692 / DSM 22644 / CIP 104116 / JCM 14847 / LMG 12228 / 1C / PRS 101 / PAO1).